A 206-amino-acid polypeptide reads, in one-letter code: Ribosomal RNA large subunit methyltransferase E (206 aa).

The S-adenosyl-L-methionine site is built by Gly-60, Trp-62, Asp-80, Asp-96, and Asp-121. Lys-161 (proton acceptor) is an active-site residue.

Belongs to the class I-like SAM-binding methyltransferase superfamily. RNA methyltransferase RlmE family.

Its subcellular location is the cytoplasm. The catalysed reaction is uridine(2552) in 23S rRNA + S-adenosyl-L-methionine = 2'-O-methyluridine(2552) in 23S rRNA + S-adenosyl-L-homocysteine + H(+). Functionally, specifically methylates the uridine in position 2552 of 23S rRNA at the 2'-O position of the ribose in the fully assembled 50S ribosomal subunit. This chain is Ribosomal RNA large subunit methyltransferase E, found in Hydrogenovibrio crunogenus (strain DSM 25203 / XCL-2) (Thiomicrospira crunogena).